We begin with the raw amino-acid sequence, 836 residues long: Taste receptor type 1 member 2 (836 aa).

The N-terminal stretch at 1–19 is a signal peptide; sequence MGPRAKAVCSLFILLQVLA. The Extracellular segment spans residues 20 to 565; that stretch reads EPAENSDFYL…AFLEWHEPST (546 aa). N-linked (GlcNAc...) asparagine glycosylation is found at Asn-84, Asn-292, Asn-312, Asn-351, Asn-427, Asn-479, Asn-486, Asn-526, and Asn-546. Residues 566 to 586 form a helical membrane-spanning segment; it reads IFVVMLTILGFLSTLAIMVIF. The Cytoplasmic portion of the chain corresponds to 587-601; that stretch reads WRHLHTPVVRSAGGP. A helical transmembrane segment spans residues 602 to 622; it reads MCFLMLVPLLLAYAMVPMYIG. Residues 623 to 634 lie on the Extracellular side of the membrane; sequence QPTFFSCLWRQT. Residues 635 to 655 form a helical membrane-spanning segment; that stretch reads FFTLCFTICISCITVRSFQIV. Residues 656–680 are Cytoplasmic-facing; it reads CIFKMARRLPRAYGYWVRCHGPYVF. The helical transmembrane segment at 681-701 threads the bilayer; the sequence is VASFMVLKVVIVAGNVLATTA. Topologically, residues 702–724 are extracellular; that stretch reads NPTARPDPDDPNIMVLSCNYRRA. The chain crosses the membrane as a helical span at residues 725–745; that stretch reads LLFNTSLDLLLSVAGFSFAYM. The Cytoplasmic segment spans residues 746–757; it reads GKELPTNYNEAK. A helical transmembrane segment spans residues 758 to 778; the sequence is FITLCMTFYFTSSVSLCTFMS. Residues 779–781 are Extracellular-facing; the sequence is VYD. Residues 782 to 802 form a helical membrane-spanning segment; it reads GVLVTILDLLITVLNLLGISF. Over 803-836 the chain is Cytoplasmic; that stretch reads GYFGPKCYMVLFYPERNTQVYFSSMIQGYTMGKD.

The protein belongs to the G-protein coupled receptor 3 family. TAS1R subfamily. As to quaternary structure, forms heterodimers with TAS1R3.

Its subcellular location is the cell membrane. In terms of biological role, putative taste receptor. TAS1R2/TAS1R3 recognizes diverse natural and synthetic sweeteners. This chain is Taste receptor type 1 member 2 (TAS1R2), found in Canis lupus familiaris (Dog).